The primary structure comprises 234 residues: MKNLLDLEHKLNYYFNDRNLLKNALLHKSLGNERKEYKNQTNERLELLGDAVLDLIVAEYLYKSYKNASEGPIAKLKAMIVSEPILAKISRQIGVGKFLMLSRGEVMSGGRNRESILADSFEAILGAVYIDSNLDEARVFALSHIKQYIDHIEENEDILDFKSILQEYVQKEFKTVPTYELVAERGPDHMKEFEIQVIVGNYKEKAVARNKKKAEQLSAKALCIKLGVKYNEAL.

The RNase III domain occupies 4–133 (LLDLEHKLNY…ILGAVYIDSN (130 aa)). Glutamate 46 is a binding site for Mg(2+). Aspartate 50 is a catalytic residue. Residues aspartate 119 and glutamate 122 each contribute to the Mg(2+) site. Residue glutamate 122 is part of the active site. The DRBM domain occupies 160-228 (DFKSILQEYV…AKALCIKLGV (69 aa)).

Belongs to the ribonuclease III family. In terms of assembly, homodimer. Requires Mg(2+) as cofactor.

Its subcellular location is the cytoplasm. The enzyme catalyses Endonucleolytic cleavage to 5'-phosphomonoester.. In terms of biological role, digests double-stranded RNA. Involved in the processing of primary rRNA transcript to yield the immediate precursors to the large and small rRNAs (23S and 16S). Processes some mRNAs, and tRNAs when they are encoded in the rRNA operon. Processes pre-crRNA and tracrRNA of type II CRISPR loci if present in the organism. The polypeptide is Ribonuclease 3 (Fusobacterium nucleatum subsp. nucleatum (strain ATCC 25586 / DSM 15643 / BCRC 10681 / CIP 101130 / JCM 8532 / KCTC 2640 / LMG 13131 / VPI 4355)).